We begin with the raw amino-acid sequence, 1703 residues long: Protein TIC 214 (1703 aa).

Transmembrane regions (helical) follow at residues 39–61 (YYGF…TFFL), 67–87 (GIIC…SIYC), 90–110 (LYVM…YMFY), 138–158 (LLLD…NPVL), 174–194 (FFLT…INSI), and 220–240 (FSIL…VPLI). Disordered regions lie at residues 615-643 (GPRK…KERE) and 1431-1494 (TKEP…WKSK). Residues 618–660 (KGKLEDKEKEKEKAAQTQTEVKKEREKEKEERVIKRFQNQSDF) adopt a coiled-coil conformation. Basic and acidic residues predominate over residues 619–643 (GKLEDKEKEKEKAAQTQTEVKKERE).

This sequence belongs to the TIC214 family. As to quaternary structure, part of the Tic complex.

It is found in the plastid. The protein localises to the chloroplast inner membrane. Involved in protein precursor import into chloroplasts. May be part of an intermediate translocation complex acting as a protein-conducting channel at the inner envelope. The sequence is that of Protein TIC 214 from Psilotum nudum (Whisk fern).